The chain runs to 323 residues: Beta-ketoacyl-[acyl-carrier-protein] synthase III (323 aa).

Active-site residues include Cys-114 and His-250. Residues Gln-251 to Arg-255 form an ACP-binding region. Residue Asn-280 is part of the active site.

This sequence belongs to the thiolase-like superfamily. FabH family. Homodimer.

The protein localises to the cytoplasm. The enzyme catalyses malonyl-[ACP] + acetyl-CoA + H(+) = 3-oxobutanoyl-[ACP] + CO2 + CoA. The protein operates within lipid metabolism; fatty acid biosynthesis. In terms of biological role, catalyzes the condensation reaction of fatty acid synthesis by the addition to an acyl acceptor of two carbons from malonyl-ACP. Catalyzes the first condensation reaction which initiates fatty acid synthesis and may therefore play a role in governing the total rate of fatty acid production. Possesses both acetoacetyl-ACP synthase and acetyl transacylase activities. Its substrate specificity determines the biosynthesis of branched-chain and/or straight-chain of fatty acids. This chain is Beta-ketoacyl-[acyl-carrier-protein] synthase III, found in Cereibacter sphaeroides (strain ATCC 17025 / ATH 2.4.3) (Rhodobacter sphaeroides).